Here is a 113-residue protein sequence, read N- to C-terminus: Large ribosomal subunit protein uL22 (113 aa).

The protein belongs to the universal ribosomal protein uL22 family. Part of the 50S ribosomal subunit.

This protein binds specifically to 23S rRNA; its binding is stimulated by other ribosomal proteins, e.g. L4, L17, and L20. It is important during the early stages of 50S assembly. It makes multiple contacts with different domains of the 23S rRNA in the assembled 50S subunit and ribosome. Functionally, the globular domain of the protein is located near the polypeptide exit tunnel on the outside of the subunit, while an extended beta-hairpin is found that lines the wall of the exit tunnel in the center of the 70S ribosome. This is Large ribosomal subunit protein uL22 from Desulforudis audaxviator (strain MP104C).